A 190-amino-acid polypeptide reads, in one-letter code: Orotate phosphoribosyltransferase (190 aa).

Position 114 to 122 (114 to 122 (EDVVTTGGS)) interacts with 5-phospho-alpha-D-ribose 1-diphosphate. Orotate contacts are provided by Thr-118 and Arg-146.

This sequence belongs to the purine/pyrimidine phosphoribosyltransferase family. PyrE subfamily. Homodimer. The cofactor is Mg(2+).

It catalyses the reaction orotidine 5'-phosphate + diphosphate = orotate + 5-phospho-alpha-D-ribose 1-diphosphate. The protein operates within pyrimidine metabolism; UMP biosynthesis via de novo pathway; UMP from orotate: step 1/2. Functionally, catalyzes the transfer of a ribosyl phosphate group from 5-phosphoribose 1-diphosphate to orotate, leading to the formation of orotidine monophosphate (OMP). The sequence is that of Orotate phosphoribosyltransferase from Thermoanaerobacter sp. (strain X514).